Consider the following 433-residue polypeptide: GPI mannosyltransferase 2 (433 aa).

A topological domain (cytoplasmic) is located at residue Met-1. Residues 2–22 (IVGLTLYFVLFRSIQYLLVFL) form a helical membrane-spanning segment. The Lumenal portion of the chain corresponds to 23–109 (TPIRQFDTST…NNDSIYHALR (87 aa)). Asn-69 and Asn-101 each carry an N-linked (GlcNAc...) asparagine glycan. Residues 110 to 130 (VGVAIENVLFYLSGIVLYFLT) traverse the membrane as a helical segment. The Cytoplasmic portion of the chain corresponds to 131-161 (KKIFSQNIRQSQFARTIAKKTSLLFFLTSAA). The helical transmembrane segment at 162–182 (GFLTSIYSEPLSFFFAFVGIW) threads the bilayer. The Lumenal portion of the chain corresponds to 183-215 (SRECSISVPVLGQFDISWRYWFPYSFISMACFT). The helical transmembrane segment at 216–236 (LASLNRSNCVLLGIYFIFDLI) threads the bilayer. Topologically, residues 237 to 243 (ELTKNRK) are cytoplasmic. Residues 244–264 (FVKAICFPLLSGSLMFSALLY) form a helical membrane-spanning segment. Residues 265–318 (QQYYLPYKTFCPQRGEWCKSQLFSSIFITKTSLYSYIQSHYWGVGLLKYWTPNN) lie on the Lumenal side of the membrane. Residues 319-339 (IPNFLFAVPNIIILIYSSIYF) traverse the membrane as a helical segment. The Cytoplasmic segment spans residues 340–350 (SKIYPSYNLKA). The helical transmembrane segment at 351–371 (LVWITRALVVIVCFFAHVQIL) threads the bilayer. Over 372-409 (NRIASFLPLHLWYLADRLVKTSDPKKMENPKGDDKIVK) the chain is Lumenal. The helical transmembrane segment at 410–430 (FYIYWLAFWIPLQTILFAAFL) threads the bilayer. At 431-433 (PPA) the chain is on the cytoplasmic side.

The protein belongs to the PIGV family. As to quaternary structure, part of the GPI mannosyltransferase 2 complex composed of GPI18 and PGA1.

It is found in the endoplasmic reticulum membrane. Its pathway is glycolipid biosynthesis; glycosylphosphatidylinositol-anchor biosynthesis. In terms of biological role, mannosyltransferase involved in glycosylphosphatidylinositol-anchor biosynthesis. Responsible for the transfer of the second mannose to the glycosylphosphatidylinositol during GPI precursor assembly. The polypeptide is GPI mannosyltransferase 2 (GPI18) (Saccharomyces cerevisiae (strain ATCC 204508 / S288c) (Baker's yeast)).